Reading from the N-terminus, the 120-residue chain is uncharacterized protein (120 aa).

The protein to M.jannaschii MJ0361.

This is an uncharacterized protein from Methanocaldococcus jannaschii (strain ATCC 43067 / DSM 2661 / JAL-1 / JCM 10045 / NBRC 100440) (Methanococcus jannaschii).